The sequence spans 369 residues: Molybdenum import ATP-binding protein ModC 1 (369 aa).

In terms of domain architecture, ABC transporter spans 10 to 240 (KGYIEVAFNG…PALASRSEAA (231 aa)). 42–49 (GPPGCGKT) lines the ATP pocket. The Mop domain occupies 297-367 (ASSILNVFRA…ELCGKLGDDG (71 aa)).

Belongs to the ABC transporter superfamily. Molybdate importer (TC 3.A.1.8) family. As to quaternary structure, the complex is composed of two ATP-binding proteins (ModC), two transmembrane proteins (ModB) and a solute-binding protein (ModA).

Its subcellular location is the cell inner membrane. It carries out the reaction molybdate(out) + ATP + H2O = molybdate(in) + ADP + phosphate + H(+). Functionally, part of the ABC transporter complex ModABC involved in molybdenum import. Responsible for energy coupling to the transport system. This is Molybdenum import ATP-binding protein ModC 1 from Bradyrhizobium diazoefficiens (strain JCM 10833 / BCRC 13528 / IAM 13628 / NBRC 14792 / USDA 110).